Here is a 947-residue protein sequence, read N- to C-terminus: Ionotropic receptor 25a (947 aa).

The N-terminal stretch at methionine 1–alanine 30 is a signal peptide. The Extracellular segment spans residues glutamine 31–glutamate 562. N-linked (GlcNAc...) asparagine glycosylation is found at asparagine 78, asparagine 177, asparagine 277, and asparagine 434. A helical transmembrane segment spans residues threonine 563–phenylalanine 583. The Cytoplasmic portion of the chain corresponds to aspartate 584–tryptophan 641. The helical transmembrane segment at tryptophan 642–valine 662 threads the bilayer. The Extracellular segment spans residues serine 663 to asparagine 858. N-linked (GlcNAc...) asparagine glycosylation is found at asparagine 687, asparagine 715, and asparagine 762. The helical transmembrane segment at isoleucine 859–phenylalanine 879 threads the bilayer. The Cytoplasmic segment spans residues glutamate 880 to phenylalanine 947.

It belongs to the glutamate-gated ion channel (TC 1.A.10.1) family. In terms of assembly, interacts with nocte. In terms of tissue distribution, in the antenna, detected in neurons of the arista and also detected in sacculus neurons which innervate the first and second chambers (at protein level). Throughout the main body of the antenna, expressed in neurons which innervate the coeloconic class of olfactory sensilla (at protein level). Expressed in multiple cells of the dorsal organ including the dorsal organ cool cells (at protein level). Detected in femur and retina. Expressed in a subset of femur chordonotal neurons and antennal Johnston's Organ neurons.

It localises to the cell membrane. Its subcellular location is the cell projection. It is found in the axon. The protein resides in the dendrite. The protein localises to the perikaryon. It localises to the cilium. Its function is as follows. Integral part of various neural sensory systems in the antenna that provide the neural basis for the response to environmental changes in temperature (thermosensation), humidity (hygrosensation) and odor detection. Required for odor-evoked electrophysiological responses in multiple neuron classes in the antenna and is likely to function as part of an olfactory receptor complex with Ir76a and Ir76b. Together with Ir21a and Ir93a, mediates the response of the larval dorsal organ cool cells, a trio of cool-responsive neurons, to cooling and is required for cool avoidance behavior. Required in chordonotal organ neurons for behavioral synchronization to low-amplitude temperature cycles and mediates circadian clock resetting by temperature. Together with Ir40a and Ir93a, mediates the response of the hydrosensory sacculus neurons to changes in relative humidity, and is required for dry detection and humidiy preference behavior. The chain is Ionotropic receptor 25a from Drosophila melanogaster (Fruit fly).